The primary structure comprises 164 residues: Ubiquitin-fold modifier-conjugating enzyme 1 (164 aa).

The active-site Glycyl thioester intermediate is cysteine 116.

It belongs to the ubiquitin-conjugating enzyme family. UFC1 subfamily.

E2-like enzyme which forms an intermediate with UFM1 via a thioester linkage. The polypeptide is Ubiquitin-fold modifier-conjugating enzyme 1 (Drosophila erecta (Fruit fly)).